We begin with the raw amino-acid sequence, 493 residues long: MASGILVNVKEEVTCPICLELLTQPLSLDCGHSFCQACLTANHEKSMLDKGESSCPVCRISYQPENIRPNRHVANIVEKLREVKLSPEGQKVDHCARHGEKLLLFCQEDGKVICWLCERSQEHRGHHTFLTEEVAQECQVKLQAALEMLRQKQQEAEELEADIREEKASWKTQIQYDKTNVLADFEQLRDILDWEESNELQNLEKEEEDILKRLTKSETEMVQQTQSVRELISDLEHRLQGSVMELLQGVDGVIKRMENVTLKKPETFPKNRRRVFRAPDLKGMLEVFRELTDVRRYWVDVTVAPNNISCAVISEDMRQVSSPKPQIIYGAQGTRYQTFMNFNYCTGILGSQSITSGKHYWEVDVSKKSAWILGVCAGFQPDATCNIEKNENYQPKYGYWVIGLEEGVKCSAFQDGSFHTPSAPFIVPLSVIICPDRVGVFLDYEACTVSFFNITNHGFLIYKFSHCSFSQPVFPYLNPRKCRVPMTLCSPSS.

Alanine 2 is modified (N-acetylalanine). The RING-type zinc finger occupies 15 to 59 (CPICLELLTQPLSLDCGHSFCQACLTANHEKSMLDKGESSCPVCR). Position 86 is a phosphoserine (serine 86). Residues 90–132 (QKVDHCARHGEKLLLFCQEDGKVICWLCERSQEHRGHHTFLTE) form a B box-type zinc finger. Positions 95, 98, 117, and 123 each coordinate Zn(2+). Positions 131-240 (TEEVAQECQV…LISDLEHRLQ (110 aa)) form a coiled coil. The interval 185 to 198 (FEQLRDILDWEESN) is required for interaction with GABARAP and for autophagy. Residues 281–493 (LKGMLEVFRE…VPMTLCSPSS (213 aa)) enclose the B30.2/SPRY domain.

Belongs to the TRIM/RBCC family. Can form homodimers and homotrimers. In addition to lower-order dimerization, also exhibits a higher-order multimerization and both low- and high-order multimerizations are essential for its restriction activity. Interacts with BTBD1 and BTBD2. Interacts with PSMC4, PSMC5, PSMD7 and HSPA8/HSC70. Interacts (via B30.2/SPRY domain) with HSPA1A/B. Interacts with PSMC2, MAP3K7/TAK1, TAB2 and TAB3. Interacts with SQSTM1. Interacts with TRIM6 and TRIM34. Interacts with ULK1 (phosphorylated form), GABARAP, GABARAPL1, GABARAPL2, MAP1LC3A, MAP1LC3C and BECN1. Post-translationally, degraded in a proteasome-independent fashion in the absence of viral infection but in a proteasome-dependent fashion following exposure to restriction sensitive virus. Autoubiquitinated in a RING finger- and UBE2D2-dependent manner. Monoubiquitinated by TRIM21. Deubiquitinated by Yersinia YopJ. Ubiquitination may not lead to proteasomal degradation.

The protein resides in the cytoplasm. The protein localises to the nucleus. It catalyses the reaction S-ubiquitinyl-[E2 ubiquitin-conjugating enzyme]-L-cysteine + [acceptor protein]-L-lysine = [E2 ubiquitin-conjugating enzyme]-L-cysteine + N(6)-ubiquitinyl-[acceptor protein]-L-lysine.. Its pathway is protein modification; protein ubiquitination. Functionally, capsid-specific restriction factor that prevents infection from non-host-adapted retroviruses. Blocks viral replication early in the life cycle, after viral entry but before reverse transcription. In addition to acting as a capsid-specific restriction factor, also acts as a pattern recognition receptor that activates innate immune signaling in response to the retroviral capsid lattice. Binding to the viral capsid triggers its E3 ubiquitin ligase activity, and in concert with the heterodimeric ubiquitin conjugating enzyme complex UBE2V1-UBE2N (also known as UBC13-UEV1A complex) generates 'Lys-63'-linked polyubiquitin chains, which in turn are catalysts in the autophosphorylation of the MAP3K7/TAK1 complex (includes TAK1, TAB2, and TAB3). Activation of the MAP3K7/TAK1 complex by autophosphorylation results in the induction and expression of NF-kappa-B and MAPK-responsive inflammatory genes, thereby leading to an innate immune response in the infected cell. Plays a role in regulating autophagy through activation of autophagy regulator BECN1 by causing its dissociation from its inhibitors BCL2 and TAB2. In Gorilla gorilla gorilla (Western lowland gorilla), this protein is Tripartite motif-containing protein 5 (TRIM5).